Reading from the N-terminus, the 489-residue chain is Squalene monooxygenase (489 aa).

The chain crosses the membrane as a helical span at residues 10–30; sequence VTYDALIVGAGVIGPCVATAL. FAD is bound by residues 21 to 22, 41 to 42, Arg-49, Arg-151, Val-167, Asp-328, and Met-341; these read VI and ER. Transmembrane regions (helical) follow at residues 426-446 and 464-484; these read FLAGVLPKPLLLTRVFFAVAF and ALLEGIMILITAIKVFTPFLV.

It belongs to the squalene monooxygenase family. FAD serves as cofactor.

It localises to the microsome membrane. The protein resides in the endoplasmic reticulum membrane. It catalyses the reaction squalene + reduced [NADPH--hemoprotein reductase] + O2 = (S)-2,3-epoxysqualene + oxidized [NADPH--hemoprotein reductase] + H2O + H(+). It functions in the pathway terpene metabolism; lanosterol biosynthesis; lanosterol from farnesyl diphosphate: step 2/3. In terms of biological role, catalyzes the stereospecific oxidation of squalene to (S)-2,3-epoxysqualene, and is considered to be a rate-limiting enzyme in steroid biosynthesis. The polypeptide is Squalene monooxygenase (ERG1) (Candida glabrata (strain ATCC 2001 / BCRC 20586 / JCM 3761 / NBRC 0622 / NRRL Y-65 / CBS 138) (Yeast)).